A 407-amino-acid polypeptide reads, in one-letter code: MSSTVKKTGVKKVVLAYSGGLDTSAIIPWLKETYDDCEIVAFCADVGQGEEELVGLTEKALASGASECHIVDLKEEFVKDYIYPTIATGAIYEGTYLLGTSMARPIIAKAQVEVARKVGADALCHGCTGKGNDQVRFEGCFAALAPDLKVIAPWREWEMRSREDLLAYLAARDIQTSASATKIYSRDANAWHISHEGGELEDPWNEPSKGVWTLTVAPEDAPDEAEYVALSIKHGRVTHVNEQVLSPYNALMKLNDIASKHGVGRIDITENRLVGMKSRGCYETPGGTVMFAGLRAIEELVLDKTSRTWREQVAAQMAHLVYDGRWFTPLCNSLLAASESLAEAVNGDVVIKLYKGQATAVKKRSPNSLYSESFATFGEDDVYDQKHAEGFIRLYSLASRIRAMNSN.

ATP-binding positions include 16-24 (AYSGGLDTS) and Ala44. L-citrulline-binding residues include Tyr96 and Ser101. Residue Gly126 coordinates ATP. L-aspartate is bound by residues Thr128, Asn132, and Asp133. Position 132 (Asn132) interacts with L-citrulline. L-citrulline contacts are provided by Arg136, Ser185, Ser194, Glu270, and Tyr282.

The protein belongs to the argininosuccinate synthase family. Type 1 subfamily. Homotetramer.

It is found in the cytoplasm. It catalyses the reaction L-citrulline + L-aspartate + ATP = 2-(N(omega)-L-arginino)succinate + AMP + diphosphate + H(+). Its pathway is amino-acid biosynthesis; L-arginine biosynthesis; L-arginine from L-ornithine and carbamoyl phosphate: step 2/3. This is Argininosuccinate synthase from Shewanella denitrificans (strain OS217 / ATCC BAA-1090 / DSM 15013).